We begin with the raw amino-acid sequence, 164 residues long: Endoribonuclease YbeY (164 aa).

His-124, His-128, and His-134 together coordinate Zn(2+).

Belongs to the endoribonuclease YbeY family. It depends on Zn(2+) as a cofactor.

The protein resides in the cytoplasm. Its function is as follows. Single strand-specific metallo-endoribonuclease involved in late-stage 70S ribosome quality control and in maturation of the 3' terminus of the 16S rRNA. The protein is Endoribonuclease YbeY of Nitrosomonas europaea (strain ATCC 19718 / CIP 103999 / KCTC 2705 / NBRC 14298).